A 36-amino-acid chain; its full sequence is Pancreatic polypeptide (36 aa).

Phenylalanine amide is present on Phe36.

It belongs to the NPY family.

Its subcellular location is the secreted. Its function is as follows. Hormone secreted by pancreatic cells that acts as a regulator of pancreatic and gastrointestinal functions. This is Pancreatic polypeptide (ppy) from Alligator mississippiensis (American alligator).